A 230-amino-acid polypeptide reads, in one-letter code: RNA-binding riboflavin kinase RibR (230 aa).

This sequence belongs to the RibR family.

It carries out the reaction riboflavin + ATP = FMN + ADP + H(+). Functionally, may be directly involved in the regulation of the rib genes. C-terminal part of RibR specifically binds to RFN of the rib leader of the riboflavin biosynthetic operon. The RFN element is a sequence within the rib-leader mRNA reported to serve as a receptor for an FMN-dependent riboswitch. Possibly, RibR produces the comodulator FMN through its own N-terminal flavokinase activity. FMN-activated RibR may stabilize the anti-anti terminator structure of RFN mRNA, causing transcription termination of the rib genes in trans. This chain is RNA-binding riboflavin kinase RibR (ribR), found in Bacillus subtilis (strain 168).